The sequence spans 306 residues: Glutaminase (306 aa).

Serine 64, asparagine 115, glutamate 159, asparagine 166, tyrosine 190, tyrosine 242, and valine 260 together coordinate substrate.

The protein belongs to the glutaminase family. As to quaternary structure, homotetramer.

The enzyme catalyses L-glutamine + H2O = L-glutamate + NH4(+). In Vibrio parahaemolyticus serotype O3:K6 (strain RIMD 2210633), this protein is Glutaminase.